A 239-amino-acid polypeptide reads, in one-letter code: Probable transcriptional regulatory protein BPUM_0743 (239 aa).

The protein belongs to the TACO1 family. YeeN subfamily.

Its subcellular location is the cytoplasm. The chain is Probable transcriptional regulatory protein BPUM_0743 from Bacillus pumilus (strain SAFR-032).